The primary structure comprises 248 residues: DNA repair protein RecO (248 aa).

The protein belongs to the RecO family.

Functionally, involved in DNA repair and RecF pathway recombination. The protein is DNA repair protein RecO of Bacillus cereus (strain B4264).